A 538-amino-acid chain; its full sequence is Dolichol kinase (538 aa).

Topologically, residues 1–18 are lumenal; sequence MTRECAPPTPGSGAPLSG. Residues 19 to 39 form a helical membrane-spanning segment; sequence SVLAEAAVVFVVVLSIHAAVW. Topologically, residues 40–74 are cytoplasmic; the sequence is DRYSWCAVALAVQAFYVQYKWDRLLQQGSAVFQFR. The chain crosses the membrane as a helical span at residues 75-95; it reads MSANSGLLPASVVMPLLGLVM. Over 96–111 the chain is Lumenal; the sequence is KERCQAAGNPYFERFG. A helical transmembrane segment spans residues 112 to 132; the sequence is IVVAATGMAVALFSSVLALGI. Residues 133–134 are Cytoplasmic-facing; sequence TR. Residues 135-155 traverse the membrane as a helical segment; it reads PVPTNTCVISGLAGGVIIYIM. At 156-163 the chain is on the lumenal side; the sequence is KHSLSVGE. The chain crosses the membrane as a helical span at residues 164–184; the sequence is VIEVLEALLIFVYLNMILLYL. Residues 185–188 lie on the Cytoplasmic side of the membrane; it reads LPRC. The chain crosses the membrane as a helical span at residues 189 to 209; that stretch reads FTPGEALLVLGGISFMLNQLI. Topologically, residues 210-224 are lumenal; the sequence is KRSLTVVESQGDPLD. A helical transmembrane segment spans residues 225–245; sequence FFLLVVVVGMVLMGIFFSTLF. Residues 246 to 254 lie on the Cytoplasmic side of the membrane; that stretch reads VFMDSGTWA. A helical membrane pass occupies residues 255 to 275; sequence SSIFFHLMTCVLGLGVVLPWL. Topologically, residues 276-297 are lumenal; that stretch reads HRLIRRNPLLWLFQFLFQTETR. The chain crosses the membrane as a helical span at residues 298 to 318; sequence VYLLAYWCLLATVACLVVLYQ. Residues 319–337 are Cytoplasmic-facing; that stretch reads NAKRSSSESKKHQAPTITR. The chain crosses the membrane as a helical span at residues 338 to 354; sequence KYFHFIVVATYIPGIIL. At 355-359 the chain is on the lumenal side; that stretch reads DRPLL. The chain crosses the membrane as a helical span at residues 360–380; it reads YVAATVCLAVFIFLEYVRYFR. Topologically, residues 381–401 are cytoplasmic; sequence IKPLGHTLRSLLSLFLDERDS. Residues 402–422 traverse the membrane as a helical segment; that stretch reads GPLILTHIYLLLGMSLPIWLV. The Lumenal portion of the chain corresponds to 423–436; that stretch reads PRPCTQKGSLGGAR. The chain crosses the membrane as a helical span at residues 437–457; that stretch reads ALVPYAGVLAVGVGDTVASIF. The Cytoplasmic portion of the chain corresponds to 458 to 472; that stretch reads GSTMGEIRWPGTKKT. The CTP-binding stretch occupies residues 459 to 474; the sequence is STMGEIRWPGTKKTFE. Residues 473–493 traverse the membrane as a helical segment; the sequence is FEGTMTSIFAQIISVALILIF. The Lumenal segment spans residues 494–495; it reads DS. A helical membrane pass occupies residues 496–516; that stretch reads GVDLNYSYAWILGSISTVSLL. The Cytoplasmic segment spans residues 517-538; that stretch reads EAYTTQIDNLLLPLYLLILLMA.

The protein belongs to the polyprenol kinase family.

The protein resides in the endoplasmic reticulum membrane. It catalyses the reaction a di-trans,poly-cis-dolichol + CTP = a di-trans,poly-cis-dolichyl phosphate + CDP + H(+). The protein operates within protein modification; protein glycosylation. Its function is as follows. Catalyzes CTP-mediated phosphorylation of dolichol, the terminal step in de novo dolichyl monophosphate (Dol-P) biosynthesis. Dol-P is a lipid carrier essential for the synthesis of N-linked and O-linked oligosaccharides and for GPI anchors. The chain is Dolichol kinase (DOLK) from Bos taurus (Bovine).